Consider the following 1412-residue polypeptide: MESINVVNSVEDLPGFNPDENVEENMEVVESVKNDLEMSDDEELELSLDLTGDSMFTPPPSKRKREELSDSMKQRVNYYAIADMRMKDECLDYIKNSTYANEGWTEEMTKEFLINQSMTMKLYLETPCDADKLREYLHSSFSDSEVFGIINMANVGDAGTGKTRCMINFQSSMPGMCITGPENKTTIHYSEEYMNRNQPGCRRFEKSTCTWHKFLNLMFANTTMQIQLKKLQDDEELNKETESFVNDVSMLGSPEELRKRTRELTLLYMVKLRNIMTTVYDQMKYNFTKEKMEIYRPMYDNDSPMNQDDKMTFTWVNNDFSASLKRLNTAIAMAEQRLFGGAGQPSGEIKVSKTLEKILKKQISDLKEERRLLILRHALSKNIKTQEEYRNYVSFMTSEKRAKFAGGPDLPPMTVIYEIVMAEEDGKTPLYMKFLHSMISTVANMIYNPPYYKIRPPIYFTSGSDTQFGSISSTASPLSYILSPAIKSDEKHTMVWRGQLFRRGLDDMSSDIAKAHRVPCLRLENNLPLDESILKLWERHSTLLGDPDYHPESVRIFATHNSINQFTNKMKDSGRADLYVNDLAMISSNVVPLEGSILSSGGINSKNGINTIELSTKSETEAKKARCLAWKKKMVIYSNKIKKRVKNENKPEETKLEIKPRKVVVKGVPMDANRIIPSSEEYIDRRTGGGKECAEVNIGYTRYSEALDVEMAKTLERLNMDYKKDLAIAYGSKEAVEAEEKMLKENEDMDGLALLKTKNVNKRAKMVVESISSCKTGSRKRKHEDIVKEHEAEKRDSDDEDDFEEVDVEDTYSPTKNITTMMYITGPAKELLSKDEHIEHRMYAGNIEKKLGQGKTYAKQVFTSARATDHLGIFEYVPEGDMVTIYGNVDVKAYDKDDMATFYKSVEKNISGVVMHMTFKRPRAFTSNRKVDMIRNNMTLIPRGVESTPMMMRMDGAYNNGSIASMEMKFLVNMEIVFEFLKEKIMYHMQTLIHNKMDDGELTDIFNQLFEYDGSSEMKLVANGYREAMKHCKNENKKEKGKKMGVEDLYKDSICWINCIQMLDMNFFENRKLTIYLHKSPLYDIFKYASEKSVSISANDVTFKSTIIGNYRHEALFHVVDKAIGFKPDFKKNGCGFGYEFKEEDNLDQKDRHKGDHMAMEWAMKHVYPELFYSTSAVVKYGDVMIMSSEPKMENPINWTELFCSEERKQWGKHGGSNEAFGVLARRFQAPPSTPDTILFNQKYRLPIGEGVGFPRPFRQGAGPKNSGVILKSKNKVLYYASNAAEFTDMGYDKKQAKAESGYALGMVCPFTISEAFTFHHAQGSTLAGGVFIDLGKLKNGNGELIHGMGGTSSAVLVGITRPTEVSNVKLANVEEFKKAYDKEAQTKDWARTLAKKRIISSVSTRFEKFKS.

Residues 1-22 form a disordered region; the sequence is MESINVVNSVEDLPGFNPDENV. 2 coiled-coil regions span residues 317–377 and 732–800; these read NNDF…ILRH and SKEA…SDDE. Residues 778–808 form a disordered region; the sequence is SRKRKHEDIVKEHEAEKRDSDDEDDFEEVDV. A compositionally biased stretch (basic and acidic residues) spans 783-797; that stretch reads HEDIVKEHEAEKRDS. Positions 798–808 are enriched in acidic residues; the sequence is DDEDDFEEVDV.

This is an uncharacterized protein from Magallana gigas (Pacific oyster).